Consider the following 500-residue polypeptide: L-arabinose isomerase (500 aa).

Residues glutamate 306, glutamate 333, histidine 349, and histidine 448 each contribute to the Mn(2+) site.

Belongs to the arabinose isomerase family. It depends on Mn(2+) as a cofactor.

It carries out the reaction beta-L-arabinopyranose = L-ribulose. The protein operates within carbohydrate degradation; L-arabinose degradation via L-ribulose; D-xylulose 5-phosphate from L-arabinose (bacterial route): step 1/3. Its function is as follows. Catalyzes the conversion of L-arabinose to L-ribulose. The protein is L-arabinose isomerase of Shewanella sp. (strain MR-7).